The sequence spans 429 residues: Endo-1,4-beta-xylanase 1 (429 aa).

An N-terminal signal peptide occupies residues 1 to 19 (MQTKSILTAALLAAAPASA). One can recognise a GH10 domain in the interval 43 to 336 (NSDQQYNRIL…KPAWTSISSV (294 aa)). Glu-150 functions as the Proton donor in the catalytic mechanism. The active-site Nucleophile is Glu-257. A disulfide bridge connects residues Cys-286 and Cys-292. Residues 364 to 395 (TTPPPISSPIVPSTTTTSAVPTTTVSPPEPEQ) form a disordered region. Positions 371–389 (SPIVPSTTTTSAVPTTTVS) are enriched in low complexity. One can recognise a CBM1 domain in the interval 393 to 429 (PEQTRWGQCGGIGWNGPTKCQSPWTCTRLNDWYFQCL).

The protein belongs to the glycosyl hydrolase 10 (cellulase F) family.

It is found in the secreted. It catalyses the reaction Endohydrolysis of (1-&gt;4)-beta-D-xylosidic linkages in xylans.. The protein operates within glycan degradation; xylan degradation. Functionally, endo-1,4-beta-xylanase involved in the hydrolysis of xylan, a major structural heterogeneous polysaccharide found in plant biomass representing the second most abundant polysaccharide in the biosphere, after cellulose. This Humicola insolens (Soft-rot fungus) protein is Endo-1,4-beta-xylanase 1.